A 1159-amino-acid chain; its full sequence is Ferroxidase HEPHL1 (1159 aa).

Residues 1–23 (MFLKQPGGCILLQFLGLLGLVGA) form the signal peptide. Plastocyanin-like domains lie at 24–206 (VTRT…LLVC), 217–365 (MRTD…VGNC), 378–560 (QRRY…LLVC), 570–718 (TQKG…ISSC), 730–906 (MLRT…LITC), and 914–1092 (KGRR…VPSQ). Residues 24-1114 (VTRTYYIGIV…KNLRPRGAKA (1091 aa)) lie on the Extracellular side of the membrane. Residues H126 and H128 each contribute to the Cu cation site. N160 carries N-linked (GlcNAc...) asparagine glycosylation. The cysteines at positions 180 and 206 are disulfide-linked. The Cu cation site is built by H186 and H188. N-linked (GlcNAc...) asparagine glycosylation occurs at N235. A disulfide bridge links C284 with C365. Cu cation is bound by residues H303, C346, and H351. A glycan (N-linked (GlcNAc...) asparagine) is linked at N406. C534 and C560 are oxidised to a cystine. A glycan (N-linked (GlcNAc...) asparagine) is linked at N588. Cysteines 637 and 718 form a disulfide. The Cu cation site is built by H656, C699, H704, and M709. N-linked (GlcNAc...) asparagine glycosylation is present at N771. A disulfide bond links C880 and C906. N934 is a glycosylation site (N-linked (GlcNAc...) asparagine). Positions 1002, 1005, 1007, 1047, 1048, 1049, 1053, and 1058 each coordinate Cu cation. The chain crosses the membrane as a helical span at residues 1115–1135 (ALVILFILGLLLLVATVVLAL). Topologically, residues 1136 to 1159 (RLRSSRRQMAYREVQSCALPTDAL) are cytoplasmic.

It belongs to the multicopper oxidase family. Cu cation is required as a cofactor.

The protein resides in the membrane. The enzyme catalyses 4 Fe(2+) + O2 + 4 H(+) = 4 Fe(3+) + 2 H2O. Is a copper-binding glycoprotein with ferroxidase activity. It oxidizes Fe(2+) to Fe(3+) without releasing radical oxygen species. May be involved in the regulation of intracellular iron content. This is Ferroxidase HEPHL1 (Hephl1) from Mus musculus (Mouse).